Reading from the N-terminus, the 89-residue chain is Small ribosomal subunit protein uS15 (89 aa).

Belongs to the universal ribosomal protein uS15 family. Part of the 30S ribosomal subunit. Forms a bridge to the 50S subunit in the 70S ribosome, contacting the 23S rRNA.

Its function is as follows. One of the primary rRNA binding proteins, it binds directly to 16S rRNA where it helps nucleate assembly of the platform of the 30S subunit by binding and bridging several RNA helices of the 16S rRNA. Forms an intersubunit bridge (bridge B4) with the 23S rRNA of the 50S subunit in the ribosome. This Klebsiella pneumoniae (strain 342) protein is Small ribosomal subunit protein uS15.